We begin with the raw amino-acid sequence, 227 residues long: UPF0758 protein CPE2144 (227 aa).

Residues 105–227 form the MPN domain; sequence KISKPSDVAK…FISLKEKDIL (123 aa). Zn(2+) contacts are provided by His-176, His-178, and Asp-189. Residues 176 to 189 carry the JAMM motif motif; sequence HNHPSGDPTPSRDD.

It belongs to the UPF0758 family.

This is UPF0758 protein CPE2144 from Clostridium perfringens (strain 13 / Type A).